The sequence spans 158 residues: Secreted frizzled-related protein 1 (158 aa).

The region spanning 1 to 34 is the FZ domain; it reads VRDSCEPVMQFFGFYWPEMLKCDKFPEGDVCIAM. A glycan (N-linked (GlcNAc...) asparagine) is linked at asparagine 38. Cystine bridges form between cysteine 51–cysteine 121 and cysteine 68–cysteine 123. The NTR domain occupies 51-158; it reads CPPCDNELKS…IHKWDKKNKE (108 aa).

This sequence belongs to the secreted frizzled-related protein (sFRP) family. Interacts with WNT4, WNT1, WNT2, WNT8, MYOC and FRZD6.

It is found in the secreted. Soluble frizzled-related proteins (sFRPS) function as modulators of Wnt signaling through direct interaction with Wnts. They have a role in regulating cell growth and differentiation in specific cell types. SFRP1 decreases intracellular beta-catenin levels. Has antiproliferative effects on vascular cells, in vitro and in vivo, and can induce, in vivo, an angiogenic response. In vascular cell cycle, delays the G1 phase and entry into the S phase. In kidney development, inhibits tubule formation and bud growth in metanephroi. Inhibits WNT1/WNT4-mediated TCF-dependent transcription. The sequence is that of Secreted frizzled-related protein 1 (Sfrp1) from Rattus norvegicus (Rat).